We begin with the raw amino-acid sequence, 617 residues long: DNA mismatch repair protein MutL (617 aa).

Belongs to the DNA mismatch repair MutL/HexB family.

In terms of biological role, this protein is involved in the repair of mismatches in DNA. It is required for dam-dependent methyl-directed DNA mismatch repair. May act as a 'molecular matchmaker', a protein that promotes the formation of a stable complex between two or more DNA-binding proteins in an ATP-dependent manner without itself being part of a final effector complex. This Bartonella tribocorum (strain CIP 105476 / IBS 506) protein is DNA mismatch repair protein MutL.